Consider the following 88-residue polypeptide: Small ribosomal subunit protein uS15 (88 aa).

It belongs to the universal ribosomal protein uS15 family. As to quaternary structure, part of the 30S ribosomal subunit. Forms a bridge to the 50S subunit in the 70S ribosome, contacting the 23S rRNA.

One of the primary rRNA binding proteins, it binds directly to 16S rRNA where it helps nucleate assembly of the platform of the 30S subunit by binding and bridging several RNA helices of the 16S rRNA. Its function is as follows. Forms an intersubunit bridge (bridge B4) with the 23S rRNA of the 50S subunit in the ribosome. This chain is Small ribosomal subunit protein uS15, found in Mesomycoplasma hyopneumoniae (strain 232) (Mycoplasma hyopneumoniae).